A 272-amino-acid chain; its full sequence is tRNA pseudouridine synthase A (272 aa).

Aspartate 52 (nucleophile) is an active-site residue. Tyrosine 110 is a substrate binding site.

Belongs to the tRNA pseudouridine synthase TruA family. In terms of assembly, homodimer.

It carries out the reaction uridine(38/39/40) in tRNA = pseudouridine(38/39/40) in tRNA. Functionally, formation of pseudouridine at positions 38, 39 and 40 in the anticodon stem and loop of transfer RNAs. This chain is tRNA pseudouridine synthase A, found in Cupriavidus necator (strain ATCC 17699 / DSM 428 / KCTC 22496 / NCIMB 10442 / H16 / Stanier 337) (Ralstonia eutropha).